The sequence spans 313 residues: Desiccation-related protein PCC13-62 (313 aa).

The signal sequence occupies residues 1-26 (MAQQPTFASAALVSFFLALICSCSYA).

The protein is Desiccation-related protein PCC13-62 of Craterostigma plantagineum (Blue gem).